The following is a 128-amino-acid chain: Azurin (128 aa).

A Plastocyanin-like domain is found at 1–128 (AECSVDIQGN…AMMKGTLTLK (128 aa)). 4 residues coordinate Cu cation: H46, C112, H117, and M121.

It is found in the periplasm. In terms of biological role, transfers electrons from cytochrome c551 to cytochrome oxidase. In Pseudomonas denitrificans, this protein is Azurin.